Reading from the N-terminus, the 59-residue chain is Large ribosomal subunit protein uL30 (59 aa).

The protein belongs to the universal ribosomal protein uL30 family. In terms of assembly, part of the 50S ribosomal subunit.

The protein is Large ribosomal subunit protein uL30 of Acetivibrio thermocellus (strain ATCC 27405 / DSM 1237 / JCM 9322 / NBRC 103400 / NCIMB 10682 / NRRL B-4536 / VPI 7372) (Clostridium thermocellum).